Reading from the N-terminus, the 102-residue chain is Co-chaperonin GroES (102 aa).

The protein belongs to the GroES chaperonin family. In terms of assembly, heptamer of 7 subunits arranged in a ring. Interacts with the chaperonin GroEL.

Its subcellular location is the cytoplasm. Together with the chaperonin GroEL, plays an essential role in assisting protein folding. The GroEL-GroES system forms a nano-cage that allows encapsulation of the non-native substrate proteins and provides a physical environment optimized to promote and accelerate protein folding. GroES binds to the apical surface of the GroEL ring, thereby capping the opening of the GroEL channel. The sequence is that of Co-chaperonin GroES from Streptomyces albus G.